The chain runs to 109 residues: Spermidine export protein MdtI (109 aa).

The next 4 membrane-spanning stretches (helical) occupy residues 6–26 (WIHA…NVFL), 36–56 (WFGL…SQAV), 64–84 (AYAL…WVLF), and 88–108 (LNRK…MIKL).

This sequence belongs to the drug/metabolite transporter (DMT) superfamily. Small multidrug resistance (SMR) (TC 2.A.7.1) family. MdtI subfamily. As to quaternary structure, forms a complex with MdtJ.

It localises to the cell inner membrane. Catalyzes the excretion of spermidine. In Enterobacter sp. (strain 638), this protein is Spermidine export protein MdtI.